We begin with the raw amino-acid sequence, 187 residues long: Adenylate kinase (187 aa).

10-15 is a binding site for ATP; that stretch reads GSGKGT. The NMP stretch occupies residues 30–59; it reads STGDLLRAEVAAGSPLGLKAKEVMARGDLV. AMP is bound by residues Thr-31, Arg-36, 57 to 59, 85 to 88, and Gln-92; these read DLV and GYPR. The LID stretch occupies residues 126-136; sequence GRAKAEGREDD. Position 127 (Arg-127) interacts with ATP. Positions 133 and 144 each coordinate AMP. ATP is bound at residue Gly-172.

It belongs to the adenylate kinase family. In terms of assembly, monomer.

Its subcellular location is the cytoplasm. It carries out the reaction AMP + ATP = 2 ADP. The protein operates within purine metabolism; AMP biosynthesis via salvage pathway; AMP from ADP: step 1/1. Catalyzes the reversible transfer of the terminal phosphate group between ATP and AMP. Plays an important role in cellular energy homeostasis and in adenine nucleotide metabolism. This Xanthomonas oryzae pv. oryzae (strain MAFF 311018) protein is Adenylate kinase.